The following is a 382-amino-acid chain: S-adenosylmethionine synthase (382 aa).

H14 lines the ATP pocket. A Mg(2+)-binding site is contributed by D16. E42 provides a ligand contact to K(+). The L-methionine site is built by E55 and Q91. The segment at 91-101 (QSENIAMGVNL) is flexible loop. Residues 156–158 (DMK), 222–223 (KF), D231, 237–238 (RK), A254, and K258 contribute to the ATP site. D231 lines the L-methionine pocket. K262 is a binding site for L-methionine.

Belongs to the AdoMet synthase family. In terms of assembly, homotetramer; dimer of dimers. Mg(2+) serves as cofactor. Requires K(+) as cofactor.

The protein resides in the cytoplasm. It catalyses the reaction L-methionine + ATP + H2O = S-adenosyl-L-methionine + phosphate + diphosphate. It functions in the pathway amino-acid biosynthesis; S-adenosyl-L-methionine biosynthesis; S-adenosyl-L-methionine from L-methionine: step 1/1. In terms of biological role, catalyzes the formation of S-adenosylmethionine (AdoMet) from methionine and ATP. The overall synthetic reaction is composed of two sequential steps, AdoMet formation and the subsequent tripolyphosphate hydrolysis which occurs prior to release of AdoMet from the enzyme. The sequence is that of S-adenosylmethionine synthase from Mycoplasmopsis synoviae (strain 53) (Mycoplasma synoviae).